A 160-amino-acid polypeptide reads, in one-letter code: SsrA-binding protein (160 aa).

The protein belongs to the SmpB family.

It localises to the cytoplasm. Its function is as follows. Required for rescue of stalled ribosomes mediated by trans-translation. Binds to transfer-messenger RNA (tmRNA), required for stable association of tmRNA with ribosomes. tmRNA and SmpB together mimic tRNA shape, replacing the anticodon stem-loop with SmpB. tmRNA is encoded by the ssrA gene; the 2 termini fold to resemble tRNA(Ala) and it encodes a 'tag peptide', a short internal open reading frame. During trans-translation Ala-aminoacylated tmRNA acts like a tRNA, entering the A-site of stalled ribosomes, displacing the stalled mRNA. The ribosome then switches to translate the ORF on the tmRNA; the nascent peptide is terminated with the 'tag peptide' encoded by the tmRNA and targeted for degradation. The ribosome is freed to recommence translation, which seems to be the essential function of trans-translation. This chain is SsrA-binding protein, found in Photorhabdus laumondii subsp. laumondii (strain DSM 15139 / CIP 105565 / TT01) (Photorhabdus luminescens subsp. laumondii).